The primary structure comprises 953 residues: ALS2 C-terminal-like protein (953 aa).

MORN repeat units lie at residues 358 to 380 (YEGE…DGRN), 381 to 403 (HVGD…QASE), 409 to 431 (YKCH…TSEV), 432 to 454 (YKGY…PQAP), 459 to 481 (YTGH…DRGE), 483 to 505 (YIGM…AGVC), 506 to 528 (YQGT…DDSL), and 529 to 552 (YEGT…NGFT). The region spanning 796–942 (LFPDARLLEF…IQKEDMRLHR (147 aa)) is the VPS9 domain.

As to quaternary structure, homodimer. Forms a heteromeric complex with ALS2. Interacts with ALS2 and RAB5A.

It is found in the cytoplasm. Its function is as follows. Acts as a guanine nucleotide exchange factor (GEF) for Rab5 GTPase. Regulates the ALS2-mediated endosome dynamics. The protein is ALS2 C-terminal-like protein (ALS2CL) of Bos taurus (Bovine).